A 188-amino-acid chain; its full sequence is UPF0301 protein Cag_1601 (188 aa).

The protein belongs to the UPF0301 (AlgH) family.

The sequence is that of UPF0301 protein Cag_1601 from Chlorobium chlorochromatii (strain CaD3).